The primary structure comprises 177 residues: SKP1-like protein 15 (177 aa).

The interval 108–167 is interaction with the F-box domain of F-box proteins; sequence ILAANYLNVEGLLGLTCQTVADYIKDKTPEEVRELFNIENDFTHEEEEEAIRKENAWAFE.

It belongs to the SKP1 family. Part of a SCF (SKP1-cullin-F-box) protein ligase complex. Expressed at low levels in seedlings and leaves.

The protein resides in the nucleus. It participates in protein modification; protein ubiquitination. Involved in ubiquitination and subsequent proteasomal degradation of target proteins. Together with CUL1, RBX1 and a F-box protein, it forms a SCF E3 ubiquitin ligase complex. The functional specificity of this complex depends on the type of F-box protein. In the SCF complex, it serves as an adapter that links the F-box protein to CUL1. The protein is SKP1-like protein 15 (ASK15) of Arabidopsis thaliana (Mouse-ear cress).